We begin with the raw amino-acid sequence, 544 residues long: CTP synthase (544 aa).

The segment at 1 to 265 is amidoligase domain; it reads MARFIFITGG…DKAVLSAFGL (265 aa). CTP is bound at residue Ser13. Residue Ser13 participates in UTP binding. 14 to 19 is a binding site for ATP; sequence SLGKGL. Tyr54 contacts L-glutamine. Asp71 is a binding site for ATP. 2 residues coordinate Mg(2+): Asp71 and Glu139. Residues 146 to 148, 186 to 191, and Lys222 each bind CTP; these read DIE and KTKPTQ. UTP is bound by residues 186–191 and Lys222; that span reads KTKPTQ. A Glutamine amidotransferase type-1 domain is found at 291–543; it reads TIGVVGKYVG…VAAALKQSRL (253 aa). Residue Gly355 participates in L-glutamine binding. The active-site Nucleophile; for glutamine hydrolysis is Cys382. L-glutamine-binding positions include 383-386, Glu406, and Arg471; that span reads LGMQ. Catalysis depends on residues His516 and Glu518.

It belongs to the CTP synthase family. In terms of assembly, homotetramer.

The enzyme catalyses UTP + L-glutamine + ATP + H2O = CTP + L-glutamate + ADP + phosphate + 2 H(+). The catalysed reaction is L-glutamine + H2O = L-glutamate + NH4(+). It carries out the reaction UTP + NH4(+) + ATP = CTP + ADP + phosphate + 2 H(+). Its pathway is pyrimidine metabolism; CTP biosynthesis via de novo pathway; CTP from UDP: step 2/2. Its activity is regulated as follows. Allosterically activated by GTP, when glutamine is the substrate; GTP has no effect on the reaction when ammonia is the substrate. The allosteric effector GTP functions by stabilizing the protein conformation that binds the tetrahedral intermediate(s) formed during glutamine hydrolysis. Inhibited by the product CTP, via allosteric rather than competitive inhibition. Functionally, catalyzes the ATP-dependent amination of UTP to CTP with either L-glutamine or ammonia as the source of nitrogen. Regulates intracellular CTP levels through interactions with the four ribonucleotide triphosphates. The protein is CTP synthase of Zymomonas mobilis subsp. mobilis (strain ATCC 31821 / ZM4 / CP4).